We begin with the raw amino-acid sequence, 949 residues long: Piwi-like protein 2 (949 aa).

The interval 1–125 (MDPTRPPFRG…SLSTRVQQAS (125 aa)) is disordered. Positions 115–125 (PSLSTRVQQAS) are enriched in polar residues. The 113-residue stretch at 366-478 (SVLDIMNILY…LLPELAFMTG (113 aa)) folds into the PAZ domain. A Piwi domain is found at 644–935 (LLVCLISGTR…LAFLSGQFLH (292 aa)). Catalysis depends on residues D721, E759, D791, and H924.

The protein belongs to the argonaute family. Piwi subfamily. Component of the PET complex. The cofactor is Mg(2+). Methylated on arginine residues; required for the interaction with Tudor domain-containing protein and subsequent localization to the meiotic nuage, also named P granule. As to expression, expressed in oocytes, testis and liver (at protein level).

Its subcellular location is the cytoplasm. The protein resides in the nucleus. In terms of biological role, endoribonuclease that plays a central role during spermatogenesis by repressing transposable elements and preventing their mobilization, which is essential for the germline integrity. Plays an essential role in meiotic differentiation of spermatocytes, germ cell differentiation and in self-renewal of spermatogonial stem cells. Acts via the piRNA metabolic process, which mediates the repression of transposable elements during meiosis by forming complexes composed of piRNAs and Piwi proteins and govern the methylation and subsequent repression of transposons. During piRNA biosynthesis, plays a key role in the piRNA amplification loop, also named ping-pong amplification cycle, by acting as a 'slicer-competent' piRNA endoribonuclease that cleaves primary piRNAs, which are then loaded onto 'slicer-incompetent' piwil4. Piwil2 slicing produces a pre-miRNA intermediate, which is then processed in mature piRNAs, and as well as a 16 nucleotide by-product that is degraded. Required for piwil4/miwi2 nuclear localization and association with secondary piRNAs antisense. Represses circadian rhythms by promoting the stability and activity of core clock components BMAL1 and CLOCK. The polypeptide is Piwi-like protein 2 (piwil2) (Xenopus tropicalis (Western clawed frog)).